We begin with the raw amino-acid sequence, 1404 residues long: DNA-directed RNA polymerase subunit beta' (1404 aa).

Positions 70, 72, 85, and 88 each coordinate Zn(2+). Mg(2+) is bound by residues Asp460, Asp462, and Asp464. The Zn(2+) site is built by Cys814, Cys888, Cys895, and Cys898.

This sequence belongs to the RNA polymerase beta' chain family. As to quaternary structure, the RNAP catalytic core consists of 2 alpha, 1 beta, 1 beta' and 1 omega subunit. When a sigma factor is associated with the core the holoenzyme is formed, which can initiate transcription. Requires Mg(2+) as cofactor. It depends on Zn(2+) as a cofactor.

The catalysed reaction is RNA(n) + a ribonucleoside 5'-triphosphate = RNA(n+1) + diphosphate. Its function is as follows. DNA-dependent RNA polymerase catalyzes the transcription of DNA into RNA using the four ribonucleoside triphosphates as substrates. This Buchnera aphidicola subsp. Baizongia pistaciae (strain Bp) protein is DNA-directed RNA polymerase subunit beta'.